Consider the following 906-residue polypeptide: Gamma-tubulin complex component 3 homolog (906 aa).

Residues 208–229 (GQQPSQQSTTTKGLPNTVSRNV) show a composition bias toward polar residues. The tract at residues 208 to 242 (GQQPSQQSTTTKGLPNTVSRNVPRTRREGDSSGSV) is disordered.

The protein belongs to the TUBGCP family. Interacts with gamma-tubulin.

The protein localises to the cytoplasm. It is found in the cytoskeleton. The protein resides in the microtubule organizing center. It localises to the centrosome. Its function is as follows. Necessary for the recruitment of gamma-tubulin to the centrosome and for the formation of a functional centrosome. The sequence is that of Gamma-tubulin complex component 3 homolog (tubgcp3) from Xenopus laevis (African clawed frog).